The chain runs to 155 residues: Ribosomal RNA large subunit methyltransferase H (155 aa).

S-adenosyl-L-methionine-binding positions include Leu-73, Gly-104, and 123–128 (LSPLTL).

Belongs to the RNA methyltransferase RlmH family. As to quaternary structure, homodimer.

The protein localises to the cytoplasm. The catalysed reaction is pseudouridine(1915) in 23S rRNA + S-adenosyl-L-methionine = N(3)-methylpseudouridine(1915) in 23S rRNA + S-adenosyl-L-homocysteine + H(+). Specifically methylates the pseudouridine at position 1915 (m3Psi1915) in 23S rRNA. The protein is Ribosomal RNA large subunit methyltransferase H of Pseudomonas aeruginosa (strain UCBPP-PA14).